The chain runs to 705 residues: Beta-xylosidase (705 aa).

It belongs to the glycosyl hydrolase 52 family.

It catalyses the reaction Hydrolysis of (1-&gt;4)-beta-D-xylans, to remove successive D-xylose residues from the non-reducing termini.. Its pathway is glycan degradation; xylan degradation. This chain is Beta-xylosidase (xylA), found in Geobacillus stearothermophilus (Bacillus stearothermophilus).